A 652-amino-acid chain; its full sequence is Regulator of DNA class I crossover intermediates 1 (652 aa).

Residues 1 to 228 (MNWVGGSRSR…APYKRTNSSE (228 aa)) constitute a DNA-binding region (binds DNA containing a D-loop). Disordered regions lie at residues 464–512 (YLES…KATE) and 621–652 (EKES…SNSL). Over residues 467–477 (SSQSSQSASYS) the composition is skewed to low complexity. 2 stretches are compositionally biased toward polar residues: residues 478 to 491 (PRPT…STDL) and 639 to 652 (DTTG…SNSL).

As to quaternary structure, interacts with MSH5. Interacts with TEX11. Expressed mainly in testis (at protein level). Expressed in spermatogonia and enriched in spermatocytes; absent in testicular somatic cells (at protein level). No expression or low levels in other tissues.

It is found in the chromosome. Involved in recombination, probably acting by stabilizing recombination intermediates during meiotic crossover formation. Required for normal germline development and fertility. Required for meiotic progression, complete chromosomal synapsis and crossover formation. Binds double-stranded DNA. However, also binds branched DNA molecules, such as those containing a D-loop or Holliday junction structure. Probably not required for formation of DNA double-strand breaks (DSBs). Also binds RNA in an RNA structure-independent manner, with a preference for binding 3'-UTR regions of mRNAs; may stabilize bound RNAs. The protein is Regulator of DNA class I crossover intermediates 1 of Mus musculus (Mouse).